A 318-amino-acid polypeptide reads, in one-letter code: Gamma-glutamyl hydrolase (318 aa).

A signal peptide spans 1–24; the sequence is MARLGRLLSVLGLVLCGATGLGLS. In terms of domain architecture, Gamma-glutamyl hydrolase spans 25–318; it reads APPAPTPKKP…SSFQQSYIFD (294 aa). A glycan (N-linked (GlcNAc...) asparagine) is linked at Asn116. Cys134 serves as the catalytic Nucleophile. Residues Asn163 and Asn203 are each glycosylated (N-linked (GlcNAc...) asparagine). The active-site Proton donor is His244. Asn307 is a glycosylation site (N-linked (GlcNAc...) asparagine).

Belongs to the peptidase C26 family. Homodimer.

It localises to the secreted. Its subcellular location is the extracellular space. The protein localises to the lysosome. The protein resides in the melanosome. The enzyme catalyses (6S)-5,6,7,8-tetrahydrofolyl-(gamma-L-Glu)(n) + (n-1) H2O = (6S)-5,6,7,8-tetrahydrofolate + (n-1) L-glutamate. Functionally, hydrolyzes the polyglutamate sidechains of pteroylpolyglutamates. Progressively removes gamma-glutamyl residues from pteroylpoly-gamma-glutamate to yield pteroyl-alpha-glutamate (folic acid) and free glutamate. May play an important role in the bioavailability of dietary pteroylpolyglutamates and in the metabolism of pteroylpolyglutamates and antifolates. Exhibits either endo- or exopeptidase activity depending upon the tissue of origin. When secreted, it acts primarily as an endopeptidase. This is Gamma-glutamyl hydrolase (GGH) from Bos taurus (Bovine).